The following is a 95-amino-acid chain: Protein FAM240C (95 aa).

The tract at residues 68 to 95 is disordered; it reads KMLQGPGRCPDRVPEATESLHTKDKKAA. Residues 76-95 show a composition bias toward basic and acidic residues; sequence CPDRVPEATESLHTKDKKAA.

Belongs to the FAM240 family.

In Homo sapiens (Human), this protein is Protein FAM240C (FAM240C).